Consider the following 537-residue polypeptide: Cryptic loci regulator 2 (537 aa).

A disordered region spans residues 96–116 (VSARHVRPNPKSSKDTLEKQP). Residues 107-116 (SSKDTLEKQP) show a composition bias toward basic and acidic residues.

In terms of assembly, interacts with clr3.

Its subcellular location is the nucleus. It localises to the chromosome. It is found in the centromere. The protein localises to the telomere. Required for deacetylation in the mating-type region and the centromere. Acts upstream of the histone deacetylases to promote transcriptional silencing. Required for proper positioning of nucleosomes at heterochromatic loci and for transcriptional gene silencing (TGS) function of the Snf2/Hdac-containing repressor complex (SHREC). This is Cryptic loci regulator 2 (clr2) from Schizosaccharomyces pombe (strain 972 / ATCC 24843) (Fission yeast).